The sequence spans 1402 residues: MLRYLLKTLLQMNLFADSLARDISNSSELLFGFNSSLAALNPSLLPPGDPSLNGSRVGPEDAMPRIVEQPPDLVVSRGEPATLPCRAEGRPRPNIEWYKNGARVATAREDPRAHRLLLPSGALFFPRIVHGRRSRPDEGVYTCVARNYLGAAASRNASLEVAVLRDDFRQSPGNVVVAVGEPAVMECVPPKGHPEPLVTWKKGKIKLKEEEGRITIRGGKLMMSHTFKSDAGMYMCVASNMAGERESGAAELVVLERPSFLRRPINQVVLADAPVNFLCEVQGDPQPNLHWRKDDGELPAGRYEIRSDHSLWIDQVSSEDEGTYTCVAENSVGRAEASGSLSVHVPPQFVTKPQNQTVAPGANVSFQCETKGNPPPAIFWQKEGSQVLLFPSQSLQPMGRLLVSPRGQLNITEVKIGDGGYYVCQAVSVAGSILAKALLEIKGASIDGLPPIILQGPANQTLVLGSSVWLPCRVIGNPQPNIQWKKDERWLQGDDSQFNLMDNGTLHIASIQEMDMGFYSCVAKSSIGEATWNSWLRKQEDWGASPGPATGPSNPPGPPSQPIVTEVTANSITLTWKPNPQSGATATSYVIEAFSQAAGNTWRTVADGVQLETYTISGLQPNTIYLFLVRAVGAWGLSEPSPVSEPVQTQDSSLSRPAEDPWKGQRGLAEVAVRMQEPTVLGPRTLQVSWTVDGPVQLVQGFRVSWRIAGLDQGSWTMLDLQSPHKQSTVLRGLPPGAQIQIKVQVQGQEGLGAESPFVTRSIPEEAPSGPPQGVAVALGGDRNSSVTVSWEPPLPSQRNGVITEYQIWCLGNESRFHLNRSAAGWARSVTFSGLLPGQIYRALVAAATSAGVGVASAPVLVQLPFPPAAEPGPEVSEGLAERLAKVLRKPAFLAGSSAACGALLLGFCAALYRRQKQRKELSHYTASFAYTPAVSFPHSEGLSGSSSRPPMGLGPAAYPWLADSWPHPPRSPSAQEPRGSCCPSNPDPDDRYYNEAGISLYLAQTARGANASGEGPVYSTIDPVGEELQTFHGGFPQHSSGDPSTWSQYAPPEWSEGDSGARGGQGKLLGKPVQMPSLSWPEALPPPPPSCELSCPEGPEEELKGSSDLEEWCPPVPEKSHLVGSSSSGACMVAPAPRDTPSPTSSYGQQSTATLTPSPPDPPQPPTDIPHLHQMPRRVPLGPSSPLSVSQPALSSHDGRPVGLGAGPVLSYHASPSPVPSTASSAPGRTRQVTGEMTPPLHGHRARIRKKPKALPYRREHSPGDLPPPPLPPPEEETSWPLGLRAAGSMSSLERERSGERRVVQAVPLGAQPLGAQRGPHPDAALLGCAAEEAWLPYGRPSFLSHGQGTSTCSTAGSNSSRGSNSSRGSRGSRGPGRSRSRSRSQSQSQRPGRNRREEPR.

A signal peptide spans 1-20 (MLRYLLKTLLQMNLFADSLA). Residues 21-891 (RDISNSSELL…ERLAKVLRKP (871 aa)) lie on the Extracellular side of the membrane. N-linked (GlcNAc...) asparagine glycans are attached at residues Asn-25, Asn-34, and Asn-53. 5 Ig-like C2-type domains span residues 64 to 160 (PRIV…ASLE), 166 to 253 (DDFR…AELV), 258 to 342 (PSFL…GSLS), 347 to 440 (PQFV…ALLE), and 450 to 531 (PPII…GEAT). A disulfide bridge connects residues Cys-85 and Cys-143. N-linked (GlcNAc...) asparagine glycosylation is present at Asn-156. Cystine bridges form between Cys-187/Cys-236 and Cys-279/Cys-326. 5 N-linked (GlcNAc...) asparagine glycosylation sites follow: Asn-355, Asn-363, Asn-410, Asn-459, and Asn-503. The cysteines at positions 368 and 424 are disulfide-linked. An intrachain disulfide couples Cys-472 to Cys-521. Disordered stretches follow at residues 540–561 (EDWG…PPSQ) and 639–662 (EPSP…EDPW). A compositionally biased stretch (low complexity) spans 543–552 (GASPGPATGP). Fibronectin type-III domains follow at residues 558-652 (PPSQ…TQDS), 672-766 (AVRM…IPEE), and 771-869 (PPQG…FPPA). A compositionally biased stretch (polar residues) spans 646-655 (PVQTQDSSLS). N-linked (GlcNAc...) asparagine glycosylation is found at Asn-784, Asn-813, and Asn-820. The helical transmembrane segment at 892–912 (AFLAGSSAACGALLLGFCAAL) threads the bilayer. Over 913-1402 (YRRQKQRKEL…PGRNRREEPR (490 aa)) the chain is Cytoplasmic. Disordered stretches follow at residues 965 to 989 (SWPH…NPDP), 1032 to 1307 (FHGG…VVQA), and 1340 to 1402 (GRPS…EEPR). Composition is skewed to polar residues over residues 1038 to 1049 (QHSSGDPSTWSQ) and 1142 to 1152 (PSPTSSYGQQS). The segment covering 1158–1169 (PSPPDPPQPPTD) has biased composition (pro residues). Low complexity-rich tracts occupy residues 1178 to 1191 (RRVP…LSVS) and 1215 to 1228 (ASPS…SSAP). Positions 1243 to 1254 (HGHRARIRKKPK) are enriched in basic residues. Residue Ser-1263 is modified to Phosphoserine. Over residues 1294–1304 (LERERSGERRV) the composition is skewed to basic and acidic residues. A compositionally biased stretch (polar residues) spans 1346-1357 (SHGQGTSTCSTA). Positions 1358–1371 (GSNSSRGSNSSRGS) are enriched in low complexity.

The protein belongs to the immunoglobulin superfamily. ROBO family. As to quaternary structure, interacts (via Fibronectin type-III 1 domain) with NELL2 (via the EGF domains) with a 3:3 stoichiometry; this interaction promotes oligomerization of ROBO3 resulting in the repulsion of commissural axons in the midline. As to expression, detected in embryonal spinal cord and hindbrain.

The protein localises to the membrane. Receptor involved in axon guidance during development. Acts as a multifunctional regulator of pathfinding that simultaneously mediates NELL2 repulsion, inhibits SLIT repulsion, and facilitates Netrin-1/NTN1 attraction. In spinal cord development plays a role in guiding commissural axons probably by preventing premature sensitivity to Slit proteins thus inhibiting Slit signaling through ROBO1/ROBO2. Binding OF NELL2 to the receptor ROBO3 promotes oligomerization of ROBO3, resulting in the repulsion of commissural axons in the midline. ROBO3 also indirectly boosts axon attraction to NTN1 without interacting with NTN1 itself. In terms of biological role, mediates NELL2 premature repulsion of commissural axons during midline crossing. Its function is as follows. After midline crossing by the commissural axons, may, in concert with ROBO1 and ROBO2, prevent midline recrossing. Does not mediate NELL2 signaling. The chain is Roundabout homolog 3 from Mus musculus (Mouse).